We begin with the raw amino-acid sequence, 205 residues long: Outer-membrane lipoprotein carrier protein (205 aa).

Residues 1-19 (MKKIIICFIFVFSINVSFA) form the signal peptide.

This sequence belongs to the LolA family. In terms of assembly, monomer.

It localises to the periplasm. Participates in the translocation of lipoproteins from the inner membrane to the outer membrane. Only forms a complex with a lipoprotein if the residue after the N-terminal Cys is not an aspartate (The Asp acts as a targeting signal to indicate that the lipoprotein should stay in the inner membrane). This Francisella tularensis subsp. holarctica (strain LVS) protein is Outer-membrane lipoprotein carrier protein.